Consider the following 199-residue polypeptide: NAD(P)H dehydrogenase (quinone) (199 aa).

The region spanning 4 to 190 (VLVLYYSAYG…DGARYQGRKI (187 aa)) is the Flavodoxin-like domain. Residues 10-15 (SAYGHI) and 78-80 (TRF) contribute to the FMN site. Position 12 (Y12) interacts with NAD(+). Position 98 (W98) interacts with substrate. FMN is bound by residues 113–119 (STATQHG) and H134.

It belongs to the WrbA family. The cofactor is FMN.

The catalysed reaction is a quinone + NADH + H(+) = a quinol + NAD(+). The enzyme catalyses a quinone + NADPH + H(+) = a quinol + NADP(+). This is NAD(P)H dehydrogenase (quinone) from Xanthobacter autotrophicus (strain ATCC BAA-1158 / Py2).